A 239-amino-acid polypeptide reads, in one-letter code: Cell number regulator 6 (239 aa).

A compositionally biased stretch (polar residues) spans 1–10 (MAEDATSSHP). The disordered stretch occupies residues 1–33 (MAEDATSSHPSRYVKLTKDQDAPAEDIRPGELN). Residues 16 to 29 (LTKDQDAPAEDIRP) show a composition bias toward basic and acidic residues. 2 consecutive transmembrane segments (helical) span residues 107 to 127 (CVCH…TAIF) and 136 to 156 (FLIG…TGIF).

Belongs to the cornifelin family. Expressed in roots, leaves, stalks, apical meristems, immature ears, endosperm, pericarp and tassel spikelets.

It is found in the membrane. The chain is Cell number regulator 6 (CNR6) from Zea mays (Maize).